The following is a 124-amino-acid chain: Histone H2A (124 aa).

The span at 1–18 (MSGRGKGGKAKGKSKTRS) shows a compositional bias: basic residues. Residues 1–23 (MSGRGKGGKAKGKSKTRSSRAGL) form a disordered region. Residue S2 is modified to N-acetylserine. At S2 the chain carries Phosphoserine. Q104 is subject to N5-methylglutamine.

This sequence belongs to the histone H2A family. As to quaternary structure, the nucleosome is a histone octamer containing two molecules each of H2A, H2B, H3 and H4 assembled in one H3-H4 heterotetramer and two H2A-H2B heterodimers. The octamer wraps approximately 147 bp of DNA. Phosphorylation of Ser-2 directly represses transcription.

It localises to the nucleus. It is found in the chromosome. Its function is as follows. Core component of nucleosome. Nucleosomes wrap and compact DNA into chromatin, limiting DNA accessibility to the cellular machineries which require DNA as a template. Histones thereby play a central role in transcription regulation, DNA repair, DNA replication and chromosomal stability. DNA accessibility is regulated via a complex set of post-translational modifications of histones, also called histone code, and nucleosome remodeling. The protein is Histone H2A of Platynereis dumerilii (Dumeril's clam worm).